Here is a 193-residue protein sequence, read N- to C-terminus: Tetrahydromethanopterin S-methyltransferase subunit A 2 (193 aa).

At 1-38 the chain is on the cytoplasmic side; the sequence is MADKKPTAENWPVVSGDYIVGDPESPVAVTTLASHNED. A helical membrane pass occupies residues 39–58; the sequence is IPAAAGAAIAGPCKTENLGI. The Extracellular portion of the chain corresponds to 59 to 193; the sequence is EKVVANIISN…SESEKIESEA (135 aa). His84 contacts 5-hydroxybenzimidazolylcob(I)amide. The interval 174 to 193 is disordered; sequence SKKSSFVESSSESEKIESEA.

Belongs to the MtrA family. As to quaternary structure, the complex is composed of 8 subunits; MtrA, MtrB, MtrC, MtrD, MtrE, MtrF, MtrG and MtrH. It depends on 5-hydroxybenzimidazolylcob(I)amide as a cofactor.

The protein localises to the cell membrane. It carries out the reaction 5-methyl-5,6,7,8-tetrahydromethanopterin + coenzyme M + 2 Na(+)(in) = 5,6,7,8-tetrahydromethanopterin + methyl-coenzyme M + 2 Na(+)(out). The protein operates within one-carbon metabolism; methanogenesis from CO(2); methyl-coenzyme M from 5,10-methylene-5,6,7,8-tetrahydromethanopterin: step 2/2. Its function is as follows. Part of a complex that catalyzes the formation of methyl-coenzyme M and tetrahydromethanopterin from coenzyme M and methyl-tetrahydromethanopterin. This is an energy-conserving, sodium-ion translocating step. The protein is Tetrahydromethanopterin S-methyltransferase subunit A 2 of Methanobrevibacter ruminantium (strain ATCC 35063 / DSM 1093 / JCM 13430 / OCM 146 / M1) (Methanobacterium ruminantium).